Reading from the N-terminus, the 344-residue chain is Hyoscyamine 6-dioxygenase (344 aa).

One can recognise a Fe2OG dioxygenase domain in the interval 193-293; the sequence is QIQMMLTNYY…RVSIATLIGP (101 aa). 3 residues coordinate Fe cation: His217, Asp219, and His274. Position 284 (Arg284) interacts with 2-oxoglutarate.

The protein belongs to the iron/ascorbate-dependent oxidoreductase family. As to quaternary structure, monomer. It depends on Fe(2+) as a cofactor. Requires L-ascorbate as cofactor. In terms of processing, the N-terminus is blocked. In terms of tissue distribution, root.

The catalysed reaction is L-hyoscyamine + 2-oxoglutarate + O2 = (6S)-6-hydroxyhyoscyamine + succinate + CO2. The protein operates within alkaloid biosynthesis; scopolamine biosynthesis. The protein is Hyoscyamine 6-dioxygenase (H6H) of Hyoscyamus niger (Black henbane).